Here is a 479-residue protein sequence, read N- to C-terminus: DNA polymerase IV (479 aa).

The 183-residue stretch at 7-189 (ILHLDMDAFF…MTVRTLPGVG (183 aa)) folds into the UmuC domain. Mg(2+) contacts are provided by Asp-11 and Asp-105. Glu-106 is an active-site residue. Disordered regions lie at residues 357 to 400 (AGDR…GHGW) and 430 to 479 (DPEL…TSRP). Over residues 381–396 (AERRWPSGHDVRHTEL) the composition is skewed to basic and acidic residues.

The protein belongs to the DNA polymerase type-Y family. In terms of assembly, monomer. Mg(2+) serves as cofactor.

The protein resides in the cytoplasm. It catalyses the reaction DNA(n) + a 2'-deoxyribonucleoside 5'-triphosphate = DNA(n+1) + diphosphate. Poorly processive, error-prone DNA polymerase involved in untargeted mutagenesis. Copies undamaged DNA at stalled replication forks, which arise in vivo from mismatched or misaligned primer ends. These misaligned primers can be extended by PolIV. Exhibits no 3'-5' exonuclease (proofreading) activity. May be involved in translesional synthesis, in conjunction with the beta clamp from PolIII. In Streptomyces coelicolor (strain ATCC BAA-471 / A3(2) / M145), this protein is DNA polymerase IV.